The chain runs to 358 residues: Phospho-N-acetylmuramoyl-pentapeptide-transferase (358 aa).

The next 10 membrane-spanning stretches (helical) occupy residues 3 to 23 (QILF…PALI), 54 to 74 (GVAI…IGIA), 84 to 104 (ALLV…DDFI), 114 to 134 (LTAA…GVLA), 156 to 176 (ITTV…VVVA), 187 to 207 (LDGL…IITF), 231 to 251 (LALV…WNAA), 255 to 275 (IFMG…LSIT), 283 to 303 (VVIG…VAVF), and 330 to 350 (VIIR…GLFY).

Belongs to the glycosyltransferase 4 family. MraY subfamily. Requires Mg(2+) as cofactor.

It is found in the cell membrane. It catalyses the reaction UDP-N-acetyl-alpha-D-muramoyl-L-alanyl-gamma-D-glutamyl-meso-2,6-diaminopimeloyl-D-alanyl-D-alanine + di-trans,octa-cis-undecaprenyl phosphate = di-trans,octa-cis-undecaprenyl diphospho-N-acetyl-alpha-D-muramoyl-L-alanyl-D-glutamyl-meso-2,6-diaminopimeloyl-D-alanyl-D-alanine + UMP. Its pathway is cell wall biogenesis; peptidoglycan biosynthesis. Its function is as follows. Catalyzes the initial step of the lipid cycle reactions in the biosynthesis of the cell wall peptidoglycan: transfers peptidoglycan precursor phospho-MurNAc-pentapeptide from UDP-MurNAc-pentapeptide onto the lipid carrier undecaprenyl phosphate, yielding undecaprenyl-pyrophosphoryl-MurNAc-pentapeptide, known as lipid I. This Nocardia farcinica (strain IFM 10152) protein is Phospho-N-acetylmuramoyl-pentapeptide-transferase.